Here is a 1890-residue protein sequence, read N- to C-terminus: Callose synthase 9 (1890 aa).

Topologically, residues 1–489 (MSRAESSWER…EHRTFLHLYH (489 aa)) are cytoplasmic. The helical transmembrane segment at 490 to 510 (SFHRLWIFLAMMFQALAIIAF) threads the bilayer. At 511–523 (NKDDLTSRKTLLQ) the chain is on the extracellular side. Residues 524-544 (ILSLGPTFVVMKFSESVLEVI) traverse the membrane as a helical segment. Residues 545–560 (MMYGAYSTTRRLAVSR) are Cytoplasmic-facing. The helical transmembrane segment at 561-581 (IFLRFIWFGLASVFISFLYVK) threads the bilayer. The Extracellular portion of the chain corresponds to 582 to 591 (SLKAPNSDSP). The helical transmembrane segment at 592 to 612 (IVQLYLIVIAIYGGVQFFFSI) threads the bilayer. Residues 613–658 (LMRIPTCHNIANKCDRWPVIRFFKWMRQERHYVGRGMYERTSDFIK) lie on the Cytoplasmic side of the membrane. The helical transmembrane segment at 659-679 (YLLFWLVVLSAKFSFAYFLQI) threads the bilayer. At 680-722 (KPLVGPTRMIVKQNNIPYSWHDFVSRKNYNALTVASLWAPVVA) the chain is on the extracellular side. A helical transmembrane segment spans residues 723–743 (IYLLDIHIFYTIFSAFLGFLL). The Cytoplasmic portion of the chain corresponds to 744–1457 (GARDRLGEIR…QLLDFFRMMS (714 aa)). A helical transmembrane segment spans residues 1458–1478 (FFFTTVGFYLCTMLTVLTVYI). At 1479 to 1512 (FLYGRAYLALSGVGATIRERAILLDDTALSAALN) the chain is on the extracellular side. A helical membrane pass occupies residues 1513–1533 (AQFLFQIGVFTAVPMVLGFIL). The Cytoplasmic portion of the chain corresponds to 1534 to 1539 (EQGFLQ). A helical membrane pass occupies residues 1540-1560 (AIVSFITMQFQLCTVFFTFSL). The Extracellular segment spans residues 1561–1609 (GTRTHYFGRTILHGGARYQATGRGFVVKHIKFSENYRLYSRSHFVKAME). Transmembrane regions (helical) follow at residues 1610-1630 (VILL…AVSY) and 1631-1651 (ILLT…PYLF). Residues 1652-1703 (NPAGFEWQKVVEDFKEWTNWLFYRGGIGVKGAESWEAWWEEELSHIRTLSGR) are Extracellular-facing. The helical transmembrane segment at 1704–1724 (IMETILSLRFFIFQYGIVYKL) threads the bilayer. Over 1725–1732 (KLQGSDTS) the chain is Cytoplasmic. Residues 1733 to 1753 (FAVYGWSWVAFAMIIVLFKVF) traverse the membrane as a helical segment. At 1754–1768 (TFSQKISVNFQLLLR) the chain is on the extracellular side. The helical transmembrane segment at 1769 to 1789 (FIQGLSLLMALAGIIVAVVLT) threads the bilayer. The Cytoplasmic portion of the chain corresponds to 1790–1795 (PLSVTD). Residues 1796 to 1816 (IFACVLAFIPTGWGILSIACA) traverse the membrane as a helical segment. Over 1817–1838 (WKPVLKRMGMWKSIRSLARLYD) the chain is Extracellular. A helical transmembrane segment spans residues 1839-1859 (ALMGMLIFLPVALCSWFPFVS). Topologically, residues 1860–1890 (TFQTRMMFNQAFSRGLEISLILAGDNPNSGL) are cytoplasmic.

This sequence belongs to the glycosyltransferase 48 family.

It is found in the cell membrane. The enzyme catalyses [(1-&gt;3)-beta-D-glucosyl](n) + UDP-alpha-D-glucose = [(1-&gt;3)-beta-D-glucosyl](n+1) + UDP + H(+). Its function is as follows. Involved in sporophytic and gametophytic development. Required for normal plant development. During pollen formation, required for the entry of microspores into mitosis and microspore symmetric division. May be required for correct temporal and spatial control of callose deposition during pollen mitosis. During plant growth and development, callose is found as a transitory component of the cell plate in dividing cells, is a major component of pollen mother cell walls and pollen tubes, and is found as a structural component of plasmodesmatal canals. This chain is Callose synthase 9 (CALS9), found in Arabidopsis thaliana (Mouse-ear cress).